The sequence spans 36 residues: Photosystem I reaction center subunit VIII (36 aa).

The chain crosses the membrane as a helical span at residues 8–28 (SVLVPLVGLIFPAMAMASLFL).

It belongs to the PsaI family.

The protein resides in the plastid. It is found in the chloroplast thylakoid membrane. May help in the organization of the PsaL subunit. The chain is Photosystem I reaction center subunit VIII from Daucus carota (Wild carrot).